We begin with the raw amino-acid sequence, 74 residues long: Pelophylaxin-2 (74 aa).

Residues 1-22 form the signal peptide; the sequence is MFTMKKSLLFFFFLGTIALSLC. Positions 23–42 are excised as a propeptide; it reads EEERGADEEENGAEITDEEV. Cysteine 68 and cysteine 74 are joined by a disulfide.

As to expression, expressed by the skin glands.

The protein localises to the secreted. Its function is as follows. Antimicrobial peptide. This chain is Pelophylaxin-2, found in Pelophylax fukienensis (Fukien gold-striped pond frog).